The primary structure comprises 157 residues: 6,7-dimethyl-8-ribityllumazine synthase 2 (157 aa).

5-amino-6-(D-ribitylamino)uracil is bound by residues Trp21, 55–57 (AYE), and 79–81 (FVV). Arg87 (proton donor) is an active-site residue. Ser112 lines the 5-amino-6-(D-ribitylamino)uracil pocket. Position 126 (His126) interacts with (2S)-2-hydroxy-3-oxobutyl phosphate.

Belongs to the DMRL synthase family. In terms of assembly, homodecamer, arranged as a dimer of pentamers.

It catalyses the reaction (2S)-2-hydroxy-3-oxobutyl phosphate + 5-amino-6-(D-ribitylamino)uracil = 6,7-dimethyl-8-(1-D-ribityl)lumazine + phosphate + 2 H2O + H(+). Its pathway is cofactor biosynthesis; riboflavin biosynthesis; riboflavin from 2-hydroxy-3-oxobutyl phosphate and 5-amino-6-(D-ribitylamino)uracil: step 1/2. Its function is as follows. Catalyzes the formation of 6,7-dimethyl-8-ribityllumazine by condensation of 5-amino-6-(D-ribitylamino)uracil with 3,4-dihydroxy-2-butanone 4-phosphate. This is the penultimate step in the biosynthesis of riboflavin. This is 6,7-dimethyl-8-ribityllumazine synthase 2 (ribH2) from Mesorhizobium japonicum (strain LMG 29417 / CECT 9101 / MAFF 303099) (Mesorhizobium loti (strain MAFF 303099)).